Here is a 232-residue protein sequence, read N- to C-terminus: Large ribosomal subunit protein uL1 (232 aa).

It belongs to the universal ribosomal protein uL1 family. In terms of assembly, part of the 50S ribosomal subunit.

Functionally, binds directly to 23S rRNA. The L1 stalk is quite mobile in the ribosome, and is involved in E site tRNA release. Its function is as follows. Protein L1 is also a translational repressor protein, it controls the translation of the L11 operon by binding to its mRNA. The sequence is that of Large ribosomal subunit protein uL1 from Syntrophus aciditrophicus (strain SB).